Consider the following 633-residue polypeptide: Protein BZZ1 (633 aa).

In terms of domain architecture, F-BAR spans 5-271 (LSIGNEIKDS…VVKQNKPSLN (267 aa)). Residues 138–210 (DMVNKKDNIY…INQANRTKDK (73 aa)) adopt a coiled-coil conformation. S327, S463, S472, and S476 each carry phosphoserine. The segment at 429–495 (VDSKPSSGGS…KKTTQNSSDD (67 aa)) is disordered. Residues 474-493 (NNSIRTTSTNNTKKTTQNSS) show a composition bias toward low complexity. 2 consecutive SH3 domains span residues 493–555 (SDDG…ISSA) and 577–633 (LPVR…SYCK).

Belongs to the BZZ1 family. In terms of assembly, interacts with LAS17 and MYO5.

Its subcellular location is the cytoplasm. The protein resides in the cytoskeleton. The protein localises to the actin patch. Functionally, plays a role in endocytosis and trafficking to the vacuole. Functions with type I myosins to restore polarity of the actin cytoskeleton after NaCl stress. The protein is Protein BZZ1 (BZZ1) of Saccharomyces cerevisiae (strain ATCC 204508 / S288c) (Baker's yeast).